The primary structure comprises 375 residues: Probable mitochondrial tRNA-specific 2-thiouridylase 1 (375 aa).

ATP-binding positions include 7-14 and Met-33; that span reads GMSGGVDS. Residues 94-96 are interaction with target base in tRNA; that stretch reads VPD. Cys-99 serves as the catalytic Nucleophile. An intrachain disulfide couples Cys-99 to Cys-205. Position 124 (Gly-124) interacts with ATP. The interaction with tRNA stretch occupies residues 154 to 156; that stretch reads KDQ. The active-site Cysteine persulfide intermediate is the Cys-205. The segment at 319–320 is interaction with tRNA; that stretch reads QR.

This sequence belongs to the MnmA/TRMU family.

Its subcellular location is the mitochondrion. It carries out the reaction 5-taurinomethyluridine(34) in tRNA + S-sulfanyl-L-cysteinyl-[protein] + AH2 + ATP = 5-taurinomethyl-2-thiouridine(34) in tRNA + L-cysteinyl-[protein] + A + AMP + diphosphate + H(+). Catalyzes the 2-thiolation of uridine at the wobble position (U34) of mitochondrial tRNA(Lys), tRNA(Glu) and tRNA(Gln). Required for the formation of 5-taurinomethyl-2-thiouridine (tm5s2U) of mitochondrial tRNA(Lys), tRNA(Glu), and tRNA(Gln) at the wobble position. ATP is required to activate the C2 atom of the wobble base. The polypeptide is Probable mitochondrial tRNA-specific 2-thiouridylase 1 (Caenorhabditis elegans).